The following is a 236-amino-acid chain: Proteasome subunit beta type-1 (236 aa).

Belongs to the peptidase T1B family. The 26S proteasome consists of a 20S proteasome core and two 19S regulatory subunits. The 20S proteasome core is composed of 28 subunits that are arranged in four stacked rings, resulting in a barrel-shaped structure. The two end rings are each formed by seven alpha subunits, and the two central rings are each formed by seven beta subunits. The catalytic chamber with the active sites is on the inside of the barrel.

Its subcellular location is the cytoplasm. It localises to the nucleus. Its function is as follows. Non-catalytic component of the proteasome, a multicatalytic proteinase complex which is characterized by its ability to cleave peptides with Arg, Phe, Tyr, Leu, and Glu adjacent to the leaving group at neutral or slightly basic pH. The proteasome has an ATP-dependent proteolytic activity. The protein is Proteasome subunit beta type-1 (psmB1) of Dictyostelium discoideum (Social amoeba).